The sequence spans 471 residues: Tryptophanase (471 aa).

N6-acetyllysine is present on residues K5, K115, and K156. Residue K270 is modified to N6-(pyridoxal phosphate)lysine. K450 carries the N6-acetyllysine modification.

The protein belongs to the beta-eliminating lyase family. As to quaternary structure, homotetramer. Requires pyridoxal 5'-phosphate as cofactor.

The catalysed reaction is L-tryptophan + H2O = indole + pyruvate + NH4(+). Its pathway is amino-acid degradation; L-tryptophan degradation via pyruvate pathway; indole and pyruvate from L-tryptophan: step 1/1. In Escherichia coli O6:H1 (strain CFT073 / ATCC 700928 / UPEC), this protein is Tryptophanase.